The following is a 276-amino-acid chain: Potassium/proton antiporter CemA (276 aa).

The next 3 helical transmembrane spans lie at 59 to 79 (LLLLILIPVLVNQMSKSWIFG), 199 to 219 (FFIILFTDMFIGFHSPHGWEV), and 236 to 256 (FIFLFIATFPVALDTVFKYWI).

It belongs to the CemA family.

The protein resides in the plastid. Its subcellular location is the chloroplast inner membrane. It catalyses the reaction K(+)(in) + H(+)(out) = K(+)(out) + H(+)(in). Its function is as follows. Contributes to K(+)/H(+) antiport activity by supporting proton efflux to control proton extrusion and homeostasis in chloroplasts in a light-dependent manner to modulate photosynthesis. Prevents excessive induction of non-photochemical quenching (NPQ) under continuous-light conditions. Indirectly promotes efficient inorganic carbon uptake into chloroplasts. The chain is Potassium/proton antiporter CemA from Cyanidioschyzon merolae (strain NIES-3377 / 10D) (Unicellular red alga).